The sequence spans 376 residues: 26S proteasome non-ATPase regulatory subunit 13 (376 aa).

In terms of domain architecture, PCI spans 171-338; that stretch reads SYYKDALRFL…KRVHMTWVQP (168 aa). Residue Lys298 is modified to N6-acetyllysine.

Belongs to the proteasome subunit S11 family. In terms of assembly, component of the 19S proteasome regulatory particle complex. The 26S proteasome consists of a 20S core particle (CP) and two 19S regulatory subunits (RP). The regulatory particle is made of a lid composed of 9 subunits including PSMD13, a base containing 6 ATPases and few additional components.

Component of the 26S proteasome, a multiprotein complex involved in the ATP-dependent degradation of ubiquitinated proteins. This complex plays a key role in the maintenance of protein homeostasis by removing misfolded or damaged proteins, which could impair cellular functions, and by removing proteins whose functions are no longer required. Therefore, the proteasome participates in numerous cellular processes, including cell cycle progression, apoptosis, or DNA damage repair. In Mus musculus (Mouse), this protein is 26S proteasome non-ATPase regulatory subunit 13 (Psmd13).